A 469-amino-acid chain; its full sequence is uncharacterized protein (469 aa).

The first 19 residues, 1 to 19, serve as a signal peptide directing secretion; it reads MRINFVLLITLILPWFVSG. 7 consecutive transmembrane segments (helical) span residues 199-219, 236-256, 283-303, 305-325, 338-358, 386-406, and 413-433; these read IKST…TWLL, AFWV…MVAI, AYTS…PALV, YYVY…FAPL, ILLK…PFFA, IALA…RPLL, and GFQL…AFLF.

Its subcellular location is the membrane. This is an uncharacterized protein from Schizosaccharomyces pombe (strain 972 / ATCC 24843) (Fission yeast).